The primary structure comprises 457 residues: UDP-N-acetylmuramate--L-alanine ligase (457 aa).

Position 112–118 (Gly-112–Ser-118) interacts with ATP.

This sequence belongs to the MurCDEF family.

Its subcellular location is the cytoplasm. It catalyses the reaction UDP-N-acetyl-alpha-D-muramate + L-alanine + ATP = UDP-N-acetyl-alpha-D-muramoyl-L-alanine + ADP + phosphate + H(+). It functions in the pathway cell wall biogenesis; peptidoglycan biosynthesis. Cell wall formation. The chain is UDP-N-acetylmuramate--L-alanine ligase from Desulfosudis oleivorans (strain DSM 6200 / JCM 39069 / Hxd3) (Desulfococcus oleovorans).